The chain runs to 917 residues: Outer kinetochore KNL1 complex subunit SPC105 (917 aa).

The segment covering 1–17 has biased composition (basic and acidic residues); sequence MNVDERSRIGGREKDAG. The disordered stretch occupies residues 1-38; the sequence is MNVDERSRIGGREKDAGPGKGILKQNQSSQMTSSFLEN. Polar residues predominate over residues 24 to 36; that stretch reads KQNQSSQMTSSFL. A Phosphoserine modification is found at Ser77. 3 disordered regions span residues 93-172, 235-282, and 324-343; these read QNNE…MEMT, TEYE…QPME, and HHID…KRRK. A compositionally biased stretch (polar residues) spans 106-126; the sequence is STNSPTKISSQEEPLVTSTQI. The segment covering 127-137 has biased composition (basic and acidic residues); the sequence is DDARTEEKTAA. The short motif at 146–149 is the MELT element; sequence MELT. Thr149 is subject to Phosphothreonine; by MPS1. Over residues 156 to 170 the composition is skewed to polar residues; that stretch reads PDSNKASQHDPTSME. Positions 165 to 183 are interacts with the BUB1-BUB3 complex; the sequence is DPTSMEMTEVFPRSIRQKN. 2 short sequence motifs (MELT; degenerate) span residues 169 to 172 and 232 to 235; these read MEMT and IDLT. Phosphothreonine; by MPS1 occurs at positions 172 and 235. The span at 245-257 shows a compositional bias: polar residues; it reads NSVSRSTGKSSDY. Composition is skewed to basic and acidic residues over residues 258-273 and 324-335; these read SVER…KSEN and HHIDESPSEKHA. Residue Thr356 is modified to Phosphothreonine. Position 380 is a phosphoserine (Ser380). A disordered region spans residues 397–427; it reads DVFTIEPGTEDTGMQTATDDEEDGENVDDNG. The span at 414 to 424 shows a compositional bias: acidic residues; that stretch reads TDDEEDGENVD. Residues 507-638 are required for interaction with KRE28; the sequence is PILEVEAFRC…IKEEIRSLKN (132 aa). A coiled-coil region spans residues 591 to 628; it reads ELILAENLNTLKREYEKLNEEVEKVNSIRGKIRKLNEA.

In terms of assembly, component of the KNL1/SPC105 complex composed of SPC105 and KRE28. Part of the outer kinetochore KMN network that includes the KNL1, MIS12 and NDC80 complexes. Interacts (via phosphorylated MELT motifs) with BUB1 and BUB3 in the BUB1-BUB3 complex; the interaction is direct. Interacts with the MIS12 complex subunits MTW1 (via C-terminus) and NSL1 (via C-terminus). Interacts with the NDC80 complex subunits SPC24 and SPC25. Interacts with CNN1 (via N-terminus).

The protein localises to the nucleus. The protein resides in the chromosome. It is found in the centromere. It localises to the kinetochore. In terms of biological role, acts as a component of the outer kinetochore KNL1 complex that serves as a docking point for spindle assembly checkpoint components and mediates microtubule-kinetochore interactions. Kinetochores, consisting of a centromere-associated inner segment and a microtubule-contacting outer segment, play a crucial role in chromosome segregation by mediating the physical connection between centromeric DNA and spindle microtubules. The outer kinetochore is made up of the ten-subunit KMN network, comprising the MIS12, NDC80 and KNL1 complexes, and auxiliary microtubule-associated components; together they connect the outer kinetochore with the inner kinetochore, bind microtubules, and mediate interactions with mitotic checkpoint proteins that delay anaphase until chromosomes are bioriented on the spindle. Recruits the BUB1-BUB3 complex to kinetochores when phosphorylated by MPS1, to support spindle assembly checkpoint signaling; the effect is reversed by protein phosphatase 1 (PP1). The KNL1 complex is required for kinetochore binding by the kMAPs (kinetochore-bound microtubule-associated proteins) BIM1, BIK1 and SLK19, and motors CIN8 and KAR3. This chain is Outer kinetochore KNL1 complex subunit SPC105 (SPC105), found in Saccharomyces cerevisiae (strain ATCC 204508 / S288c) (Baker's yeast).